Here is a 330-residue protein sequence, read N- to C-terminus: Nitrilase 3 (330 aa).

The region spanning 4–273 is the CN hydrolase domain; the sequence is VKAAAVQISP…EGEVIVDLDF (270 aa). Catalysis depends on glutamate 44, which acts as the Proton acceptor. Lysine 128 functions as the Proton donor in the catalytic mechanism. The Nucleophile role is filled by cysteine 162. A disordered region spans residues 310–330; sequence RAAHPVSGAEQGPEDLRTPAA.

It belongs to the carbon-nitrogen hydrolase superfamily. Nitrilase family.

The enzyme catalyses a nitrile + 2 H2O = a carboxylate + NH4(+). Its function is as follows. Nitrilases catalyze the mild hydrolytic conversion of organonitriles directly to the corresponding carboxylic acids. This Unknown prokaryotic organism protein is Nitrilase 3.